The sequence spans 84 residues: Exodeoxyribonuclease 7 small subunit (84 aa).

It belongs to the XseB family. As to quaternary structure, heterooligomer composed of large and small subunits.

The protein resides in the cytoplasm. It catalyses the reaction Exonucleolytic cleavage in either 5'- to 3'- or 3'- to 5'-direction to yield nucleoside 5'-phosphates.. Functionally, bidirectionally degrades single-stranded DNA into large acid-insoluble oligonucleotides, which are then degraded further into small acid-soluble oligonucleotides. In Bartonella quintana (strain Toulouse) (Rochalimaea quintana), this protein is Exodeoxyribonuclease 7 small subunit.